The chain runs to 486 residues: Siroheme synthase (486 aa).

The segment at 1 to 204 is precorrin-2 dehydrogenase /sirohydrochlorin ferrochelatase; that stretch reads MNYLPIFVDL…HQIEQAEALV (204 aa). NAD(+)-binding positions include 22–23 and 43–44; these read HI and EK. Serine 128 is subject to Phosphoserine. The uroporphyrinogen-III C-methyltransferase stretch occupies residues 216–486; it reads GEVSLVGAGP…NKETHWKQAA (271 aa). Position 225 (proline 225) interacts with S-adenosyl-L-methionine. Aspartate 248 functions as the Proton acceptor in the catalytic mechanism. Catalysis depends on lysine 270, which acts as the Proton donor. Residues 301–303, valine 306, 331–332, methionine 383, and glycine 412 contribute to the S-adenosyl-L-methionine site; these read GGD and TA.

The protein in the N-terminal section; belongs to the precorrin-2 dehydrogenase / sirohydrochlorin ferrochelatase family. In the C-terminal section; belongs to the precorrin methyltransferase family.

The enzyme catalyses uroporphyrinogen III + 2 S-adenosyl-L-methionine = precorrin-2 + 2 S-adenosyl-L-homocysteine + H(+). It carries out the reaction precorrin-2 + NAD(+) = sirohydrochlorin + NADH + 2 H(+). The catalysed reaction is siroheme + 2 H(+) = sirohydrochlorin + Fe(2+). It participates in cofactor biosynthesis; adenosylcobalamin biosynthesis; precorrin-2 from uroporphyrinogen III: step 1/1. Its pathway is cofactor biosynthesis; adenosylcobalamin biosynthesis; sirohydrochlorin from precorrin-2: step 1/1. It functions in the pathway porphyrin-containing compound metabolism; siroheme biosynthesis; precorrin-2 from uroporphyrinogen III: step 1/1. The protein operates within porphyrin-containing compound metabolism; siroheme biosynthesis; siroheme from sirohydrochlorin: step 1/1. It participates in porphyrin-containing compound metabolism; siroheme biosynthesis; sirohydrochlorin from precorrin-2: step 1/1. Its function is as follows. Multifunctional enzyme that catalyzes the SAM-dependent methylations of uroporphyrinogen III at position C-2 and C-7 to form precorrin-2 via precorrin-1. Then it catalyzes the NAD-dependent ring dehydrogenation of precorrin-2 to yield sirohydrochlorin. Finally, it catalyzes the ferrochelation of sirohydrochlorin to yield siroheme. This Actinobacillus pleuropneumoniae serotype 3 (strain JL03) protein is Siroheme synthase.